The sequence spans 331 residues: MKKPVVVILAVVVLLAAGIGGWLWYQSQQDRGLTLYGNVDIRTLNMSFRVGGRLESLAVDEGDTVKSGQLLGQLDKAPYENALMQAKASVSVAQAQYDLMLAGYRDEEVAQAEAAVKQAKAAYDYSQNFYNRQQGLWKSRTISANDLENARSSRDQAQATLKSAQDKLSQYRTGNRPQDIAQAKANLEQAQAQLAQAELDLHDTTLIAPSNGTLMTRAVEPGSMLSAGSTVLTLSLTRPVWVRAYIDEPNLSQAQPGREILLYTDGRPDKPYHGKIGFVSPTAEFTPKTVETPDLRTDLVYRLRIIVTDADDALRQGMPITVKFNDGEGHE.

The first 16 residues, 1-16 (MKKPVVVILAVVVLLA), serve as a signal peptide directing secretion. A coiled-coil region spans residues 107 to 208 (EEVAQAEAAV…LDLHDTTLIA (102 aa)).

It belongs to the UPF0194 family.

Its subcellular location is the periplasm. This Enterobacter sp. (strain 638) protein is UPF0194 membrane protein Ent638_1286.